A 547-amino-acid chain; its full sequence is Glucose-6-phosphate isomerase (547 aa).

The active-site Proton donor is the Glu351. Residues His382 and Lys509 contribute to the active site.

This sequence belongs to the GPI family.

Its subcellular location is the cytoplasm. The catalysed reaction is alpha-D-glucose 6-phosphate = beta-D-fructose 6-phosphate. The protein operates within carbohydrate biosynthesis; gluconeogenesis. Its pathway is carbohydrate degradation; glycolysis; D-glyceraldehyde 3-phosphate and glycerone phosphate from D-glucose: step 2/4. Its function is as follows. Catalyzes the reversible isomerization of glucose-6-phosphate to fructose-6-phosphate. The sequence is that of Glucose-6-phosphate isomerase from Coxiella burnetii (strain Dugway 5J108-111).